The sequence spans 463 residues: 23S rRNA (uracil(1939)-C(5))-methyltransferase RlmD (463 aa).

One can recognise a TRAM domain in the interval 6–76 (KSRKPQQPEY…KRLEEAEMVA (71 aa)). C90, C96, C99, and C178 together coordinate [4Fe-4S] cluster. The S-adenosyl-L-methionine site is built by Q288, F317, N322, E341, D368, and D389. C415 (nucleophile) is an active-site residue.

This sequence belongs to the class I-like SAM-binding methyltransferase superfamily. RNA M5U methyltransferase family. RlmD subfamily.

It catalyses the reaction uridine(1939) in 23S rRNA + S-adenosyl-L-methionine = 5-methyluridine(1939) in 23S rRNA + S-adenosyl-L-homocysteine + H(+). Functionally, catalyzes the formation of 5-methyl-uridine at position 1939 (m5U1939) in 23S rRNA. The sequence is that of 23S rRNA (uracil(1939)-C(5))-methyltransferase RlmD from Acinetobacter baumannii (strain ACICU).